The primary structure comprises 148 residues: Deoxyuridine 5'-triphosphate nucleotidohydrolase (148 aa).

Substrate-binding positions include 68 to 70 (RSG), asparagine 81, 85 to 87 (TID), and lysine 95.

It belongs to the dUTPase family. Mg(2+) serves as cofactor.

It catalyses the reaction dUTP + H2O = dUMP + diphosphate + H(+). Its pathway is pyrimidine metabolism; dUMP biosynthesis; dUMP from dCTP (dUTP route): step 2/2. Its function is as follows. This enzyme is involved in nucleotide metabolism: it produces dUMP, the immediate precursor of thymidine nucleotides and it decreases the intracellular concentration of dUTP so that uracil cannot be incorporated into DNA. The chain is Deoxyuridine 5'-triphosphate nucleotidohydrolase from Thermoanaerobacter sp. (strain X514).